The chain runs to 225 residues: Ribonuclease T (225 aa).

The disordered stretch occupies residues M1–H21. Residues V33–F207 form the Exonuclease domain. Residues D36, E38, H194, and D199 each coordinate Mg(2+). The active-site Proton donor/acceptor is H194.

This sequence belongs to the RNase T family. In terms of assembly, homodimer. The cofactor is Mg(2+).

Its function is as follows. Trims short 3' overhangs of a variety of RNA species, leaving a one or two nucleotide 3' overhang. Responsible for the end-turnover of tRNA: specifically removes the terminal AMP residue from uncharged tRNA (tRNA-C-C-A). Also appears to be involved in tRNA biosynthesis. The sequence is that of Ribonuclease T from Pseudomonas syringae pv. tomato (strain ATCC BAA-871 / DC3000).